Consider the following 56-residue polypeptide: Ovomucoid (56 aa).

One can recognise a Kazal-like domain in the interval 6–56; sequence VDCSEYPKPACTLEYVPICGSDNKTYGNKCNFCNAVVESNGTLTLSHFGKC. 3 disulfides stabilise this stretch: cysteine 8–cysteine 38, cysteine 16–cysteine 35, and cysteine 24–cysteine 56. N-linked (GlcNAc...) asparagine glycosylation is present at asparagine 45.

The protein localises to the secreted. This is Ovomucoid from Cyrtonyx montezumae (Montezuma quail).